A 632-amino-acid polypeptide reads, in one-letter code: Bestrophin homolog 24 (632 aa).

A run of 4 helical transmembrane segments spans residues 28–48 (IWKAVILELAVWLVLYGILSV), 83–103 (GFFVTAVVNRWTYLYQIIGFI), 234–254 (IMYPQLVCLAVHTYFLVCLLA), and 271–291 (LYFPIMSTLQFIFYMGWMKVA). Disordered stretches follow at residues 491-516 (LSNKRIDTSSSQPQLATGKRGSEHPF) and 562-632 (ETEV…TKFE). A compositionally biased stretch (basic and acidic residues) spans 563-602 (TEVKRDEKKKKEEELREEGDNGKEEKDNKEDKKEEQDRPS). The segment covering 623 to 632 (PHLRPPTKFE) has biased composition (basic residues).

It belongs to the anion channel-forming bestrophin (TC 1.A.46) family. Calcium-sensitive chloride channel subfamily. As to quaternary structure, forms oligomers.

Its subcellular location is the cell membrane. Its function is as follows. Forms chloride channels. This is Bestrophin homolog 24 (best-24) from Caenorhabditis elegans.